The chain runs to 293 residues: Nucleotide-binding protein BCQ_4976 (293 aa).

ATP is bound at residue 14 to 21 (GMSGAGKT). A GTP-binding site is contributed by 65 to 68 (DLRG).

This sequence belongs to the RapZ-like family.

In terms of biological role, displays ATPase and GTPase activities. This Bacillus cereus (strain Q1) protein is Nucleotide-binding protein BCQ_4976.